The chain runs to 212 residues: uncharacterized protein (212 aa).

Helical transmembrane passes span 34-54 (IFGI…PAPG), 59-79 (FGVL…ELWL), 126-146 (ILMG…IPGT), and 171-191 (AGMI…YVFF).

It to R.meliloti ExoD.

It is found in the cell membrane. This is an uncharacterized protein from Synechocystis sp. (strain ATCC 27184 / PCC 6803 / Kazusa).